Reading from the N-terminus, the 281-residue chain is NADPH-dependent 7-cyano-7-deazaguanine reductase (281 aa).

86-88 (IES) lines the substrate pocket. Position 88-89 (88-89 (SK)) interacts with NADPH. The active-site Thioimide intermediate is the Cys-189. The active-site Proton donor is the Asp-196. Position 228–229 (228–229 (HE)) interacts with substrate. 257–258 (RG) contacts NADPH.

It belongs to the GTP cyclohydrolase I family. QueF type 2 subfamily. Homodimer.

The protein localises to the cytoplasm. The catalysed reaction is 7-aminomethyl-7-carbaguanine + 2 NADP(+) = 7-cyano-7-deazaguanine + 2 NADPH + 3 H(+). It functions in the pathway tRNA modification; tRNA-queuosine biosynthesis. Catalyzes the NADPH-dependent reduction of 7-cyano-7-deazaguanine (preQ0) to 7-aminomethyl-7-deazaguanine (preQ1). The polypeptide is NADPH-dependent 7-cyano-7-deazaguanine reductase (Mannheimia succiniciproducens (strain KCTC 0769BP / MBEL55E)).